The following is a 267-amino-acid chain: Phosphatidylserine decarboxylase proenzyme (267 aa).

Residues Asp-78, His-132, and Ser-236 each act as charge relay system; for autoendoproteolytic cleavage activity in the active site. Ser-236 acts as the Schiff-base intermediate with substrate; via pyruvic acid; for decarboxylase activity in catalysis. Pyruvic acid (Ser); by autocatalysis is present on Ser-236.

It belongs to the phosphatidylserine decarboxylase family. PSD-B subfamily. Prokaryotic type I sub-subfamily. As to quaternary structure, heterodimer of a large membrane-associated beta subunit and a small pyruvoyl-containing alpha subunit. The cofactor is pyruvate. Post-translationally, is synthesized initially as an inactive proenzyme. Formation of the active enzyme involves a self-maturation process in which the active site pyruvoyl group is generated from an internal serine residue via an autocatalytic post-translational modification. Two non-identical subunits are generated from the proenzyme in this reaction, and the pyruvate is formed at the N-terminus of the alpha chain, which is derived from the carboxyl end of the proenzyme. The autoendoproteolytic cleavage occurs by a canonical serine protease mechanism, in which the side chain hydroxyl group of the serine supplies its oxygen atom to form the C-terminus of the beta chain, while the remainder of the serine residue undergoes an oxidative deamination to produce ammonia and the pyruvoyl prosthetic group on the alpha chain. During this reaction, the Ser that is part of the protease active site of the proenzyme becomes the pyruvoyl prosthetic group, which constitutes an essential element of the active site of the mature decarboxylase.

The protein resides in the cell membrane. It catalyses the reaction a 1,2-diacyl-sn-glycero-3-phospho-L-serine + H(+) = a 1,2-diacyl-sn-glycero-3-phosphoethanolamine + CO2. The protein operates within phospholipid metabolism; phosphatidylethanolamine biosynthesis; phosphatidylethanolamine from CDP-diacylglycerol: step 2/2. Catalyzes the formation of phosphatidylethanolamine (PtdEtn) from phosphatidylserine (PtdSer). This is Phosphatidylserine decarboxylase proenzyme from Helicobacter pylori (strain J99 / ATCC 700824) (Campylobacter pylori J99).